Reading from the N-terminus, the 231-residue chain is NADH-ubiquinone oxidoreductase chain 4 (231 aa).

A run of 7 helical transmembrane segments spans residues 1-21 (PIAGSMVLAAVLLKLGGYGII), 34-54 (MFLPFIVLALWGAILANLTCL), 63-85 (IAYSSISHMGLVVAAIIIQTPWG), 89-111 (AMALMIAHGFTSSALFCLANTTY), 128-148 (ILPMTTTWWLLANLMNIATPP), 169-189 (TIILLGLSMLITASYSLHMFL), and 211-231 (LLMALHLVPLMMISMKPELII).

This sequence belongs to the complex I subunit 4 family.

Its subcellular location is the mitochondrion membrane. The enzyme catalyses a ubiquinone + NADH + 5 H(+)(in) = a ubiquinol + NAD(+) + 4 H(+)(out). Its function is as follows. Core subunit of the mitochondrial membrane respiratory chain NADH dehydrogenase (Complex I) that is believed to belong to the minimal assembly required for catalysis. Complex I functions in the transfer of electrons from NADH to the respiratory chain. The immediate electron acceptor for the enzyme is believed to be ubiquinone. This is NADH-ubiquinone oxidoreductase chain 4 (MT-ND4) from Cerrophidion godmani (Porthidium godmani).